Consider the following 44-residue polypeptide: Photosystem I reaction center subunit IX (44 aa).

The helical transmembrane segment at 7–27 threads the bilayer; the sequence is YLSVAPVLTTLWFGSLAGLLI.

The protein belongs to the PsaJ family.

Its subcellular location is the plastid. It is found in the chloroplast thylakoid membrane. May help in the organization of the PsaE and PsaF subunits. The protein is Photosystem I reaction center subunit IX of Drimys granadensis.